The chain runs to 481 residues: ATP synthase subunit alpha (481 aa).

145 to 152 (GDRQTGKT) contributes to the ATP binding site.

Belongs to the ATPase alpha/beta chains family. As to quaternary structure, F-type ATPases have 2 components, CF(1) - the catalytic core - and CF(0) - the membrane proton channel. CF(1) has five subunits: alpha(3), beta(3), gamma(1), delta(1), epsilon(1). CF(0) has three main subunits: a(1), b(2) and c(9-12). The alpha and beta chains form an alternating ring which encloses part of the gamma chain. CF(1) is attached to CF(0) by a central stalk formed by the gamma and epsilon chains, while a peripheral stalk is formed by the delta and b chains.

Its subcellular location is the cell membrane. It carries out the reaction ATP + H2O + 4 H(+)(in) = ADP + phosphate + 5 H(+)(out). In terms of biological role, produces ATP from ADP in the presence of a proton gradient across the membrane. The alpha chain is a regulatory subunit. The polypeptide is ATP synthase subunit alpha (Carsonella ruddii (strain PV)).